Consider the following 206-residue polypeptide: Large ribosomal subunit protein uL4 (206 aa).

This sequence belongs to the universal ribosomal protein uL4 family. As to quaternary structure, part of the 50S ribosomal subunit.

Its function is as follows. One of the primary rRNA binding proteins, this protein initially binds near the 5'-end of the 23S rRNA. It is important during the early stages of 50S assembly. It makes multiple contacts with different domains of the 23S rRNA in the assembled 50S subunit and ribosome. Functionally, forms part of the polypeptide exit tunnel. The polypeptide is Large ribosomal subunit protein uL4 (Bradyrhizobium sp. (strain BTAi1 / ATCC BAA-1182)).